A 257-amino-acid chain; its full sequence is Cyclin-C1-1 (257 aa).

It belongs to the cyclin family. Cyclin C subfamily.

This is Cyclin-C1-1 from Oryza sativa subsp. japonica (Rice).